Reading from the N-terminus, the 398-residue chain is Basic helix-loop-helix neural transcription factor TAP (398 aa).

Disordered regions lie at residues 35 to 59 (ETEAQLSSRRRLDFGTPPTPAIPQP) and 102 to 144 (RATN…RSRS). Residues 127–141 (RPKRKYAVGKNRVTR) show a composition bias toward basic residues. Residues 154-206 (FRRMKANDRERNRMHNLNDALEKLRVTLPSLPEETKLTKIEILRFAHNYIFAL) form the bHLH domain. Disordered regions lie at residues 265-333 (AQHQ…QQFS) and 361-398 (QQSSFYSQTPPWKDYPEDQAHVHPVPHQHSYKNFAPQV). Positions 307–333 (HQQQQQPHQPHHLQPNPQQESSPQQFS) are enriched in low complexity. The segment covering 361-370 (QQSSFYSQTP) has biased composition (polar residues).

In terms of tissue distribution, expressed in neuronal and glial precursors during differentiation. In the peripheral nervous system, expression is exclusively in one of the neurons that innervate each larval chemosensory organ. Expressed at a late stage in the development of one type of adult chemosensory organ, the gustatory bristles of the leg, wing and proboscis. Expressed very early in the development of a second type of chemosensory receptors, the olfactory organs of the antenna.

Its subcellular location is the nucleus. Its function is as follows. May play a role in the specification of the sugar-sensitive adult gustatory neuron and affect the response to sugar and salt. Regulated by POXN. The chain is Basic helix-loop-helix neural transcription factor TAP (tap) from Drosophila melanogaster (Fruit fly).